An 882-amino-acid polypeptide reads, in one-letter code: MTSDASHMLEAALEQMDGIIAGTKTAADFSDGTCEPGLSPPSTCLNSMPVLHLIEDLRLALEMLALPQEREALLSQVPGPTATYIKEWFEDSLSQVNHHGAASNETYQERLARLEGDKESLILQVSVLTDQVEAQGEKIRDLEVCLEGHQVKLNAAEEMLQQELLSRTSLETQKLDLMTEVSELKLKLVGMEKEQKEQEEKQRKAEELLQELKHLKIKVEELENERNQYEWELKATKAEVAQLQEQVALKDAEIERLHSQLSRSAALHSDHAERDQEIHRLKMGMETLLVANEDKDRRIEELTGLLNKYLRVKEIVMATQGPSERTLSINEDEIEGSFRKWNTTNKSPEEVPKQEISPRCSSPTPGPPPLPQKSLESRAQKKLSCSLEDLRRESGDKCVDGNQLSPVGEPKDSSFLAEQKYPTLPGKLSGATPNGEAAKSPPTASLQPDSSGSSQPKLNRGWSVSAPVLRDTEGGWEDIVSSASSGTESSPQSPVTPDGKRSPKGIKKFWGKIRRTQSGNFNTDAPGMAEFRRGGLRATAGPRLSRTRDTKGQKCDANAPFAQWSTERVCTWMEDFGLGQYVIFARQWVTSGHTLLTATPQDMEKELGIKHPLHRKKLVLAVKAINAKQEETSALLDHIWVTRWLDDIGLPQYKDQFHESRVDGRMLQYLTVNDLLFLKVTSQLHHLSIKCAIHVLHVNKFNPNCLHRRPADESNLSPSEVVQWSNHRVMEWLRSVDLAEYAPNLRGSGVHGGLIILEPRFTGDTLAMLLNIPPQKTLLRRHLTTKFNALIGPEAEQEKRDKMASPAYTPLTTTAKVRPRKLGFSHFGNMRKKKFDESTDYICPMEPGDAVSDSHRVYGVYRGLSPLDNHELDGLDQVGQIS.

Residues 101 to 303 (AASNETYQER…DKDRRIEELT (203 aa)) adopt a coiled-coil conformation. A phosphoserine mark is found at S328, S362, and S386. The disordered stretch occupies residues 339–554 (RKWNTTNKSP…SRTRDTKGQK (216 aa)). Residues 388-399 (EDLRRESGDKCV) are compositionally biased toward basic and acidic residues. Composition is skewed to polar residues over residues 442–457 (PTAS…SQPK) and 481–495 (SSAS…QSPV). A phosphoserine mark is found at S502 and S518. Positions 502–515 (SPKGIKKFWGKIRR) are enriched in basic residues. SAM domains lie at 564–628 (WSTE…INAK), 636–699 (LDHI…LHVN), and 724–789 (WSNH…KFNA).

It belongs to the liprin family. Liprin-beta subfamily. Forms homodimers and heterodimers. In terms of tissue distribution, expressed widely. Strong expression in liver, kidney, intestine, heart, lung and testis. Low expression in brain and thymus.

May regulate the disassembly of focal adhesions. Did not bind receptor-like tyrosine phosphatases type 2A. The polypeptide is Liprin-beta-2 (Ppfibp2) (Mus musculus (Mouse)).